Here is a 93-residue protein sequence, read N- to C-terminus: MNIKLINIGFGNIVSASRIVAIVSPESAPIKRIIQEARERGMLIDATYGRRTRAVIVTDSDHIILSAVQPETVAHRLNSKDANKEVEASAEIE.

This sequence belongs to the RemA family.

The sequence is that of Putative regulatory protein Amet_2791 from Alkaliphilus metalliredigens (strain QYMF).